Reading from the N-terminus, the 108-residue chain is Iron-sulfur cluster assembly protein CyaY (108 aa).

The protein belongs to the frataxin family.

Its function is as follows. Involved in iron-sulfur (Fe-S) cluster assembly. May act as a regulator of Fe-S biogenesis. In Burkholderia vietnamiensis (strain G4 / LMG 22486) (Burkholderia cepacia (strain R1808)), this protein is Iron-sulfur cluster assembly protein CyaY.